A 188-amino-acid polypeptide reads, in one-letter code: Peptidyl-tRNA hydrolase (188 aa).

Tyr-14 serves as a coordination point for tRNA. His-19 (proton acceptor) is an active-site residue. 2 residues coordinate tRNA: Tyr-60 and Asn-62.

It belongs to the PTH family. As to quaternary structure, monomer.

The protein resides in the cytoplasm. The enzyme catalyses an N-acyl-L-alpha-aminoacyl-tRNA + H2O = an N-acyl-L-amino acid + a tRNA + H(+). Hydrolyzes ribosome-free peptidyl-tRNAs (with 1 or more amino acids incorporated), which drop off the ribosome during protein synthesis, or as a result of ribosome stalling. Functionally, catalyzes the release of premature peptidyl moieties from peptidyl-tRNA molecules trapped in stalled 50S ribosomal subunits, and thus maintains levels of free tRNAs and 50S ribosomes. This chain is Peptidyl-tRNA hydrolase, found in Mycoplasmopsis agalactiae (strain NCTC 10123 / CIP 59.7 / PG2) (Mycoplasma agalactiae).